The following is a 109-amino-acid chain: Nucleoid-associated protein Plut_1285 (109 aa).

It belongs to the YbaB/EbfC family. In terms of assembly, homodimer.

The protein resides in the cytoplasm. It localises to the nucleoid. Binds to DNA and alters its conformation. May be involved in regulation of gene expression, nucleoid organization and DNA protection. This is Nucleoid-associated protein Plut_1285 from Chlorobium luteolum (strain DSM 273 / BCRC 81028 / 2530) (Pelodictyon luteolum).